Here is a 143-residue protein sequence, read N- to C-terminus: Small ribosomal subunit protein eS12 (143 aa).

Glycyl lysine isopeptide (Lys-Gly) (interchain with G-Cter in ubiquitin) cross-links involve residues Lys-85, Lys-95, and Lys-114.

Belongs to the eukaryotic ribosomal protein eS12 family. As to quaternary structure, component of the small ribosomal subunit (SSU). Mature yeast ribosomes consist of a small (40S) and a large (60S) subunit. The 40S small subunit contains 1 molecule of ribosomal RNA (18S rRNA) and 33 different proteins (encoded by 57 genes). The large 60S subunit contains 3 rRNA molecules (25S, 5.8S and 5S rRNA) and 46 different proteins (encoded by 81 genes).

The protein resides in the cytoplasm. In terms of biological role, component of the ribosome, a large ribonucleoprotein complex responsible for the synthesis of proteins in the cell. The small ribosomal subunit (SSU) binds messenger RNAs (mRNAs) and translates the encoded message by selecting cognate aminoacyl-transfer RNA (tRNA) molecules. The large subunit (LSU) contains the ribosomal catalytic site termed the peptidyl transferase center (PTC), which catalyzes the formation of peptide bonds, thereby polymerizing the amino acids delivered by tRNAs into a polypeptide chain. The nascent polypeptides leave the ribosome through a tunnel in the LSU and interact with protein factors that function in enzymatic processing, targeting, and the membrane insertion of nascent chains at the exit of the ribosomal tunnel. This is Small ribosomal subunit protein eS12 from Saccharomyces cerevisiae (strain ATCC 204508 / S288c) (Baker's yeast).